The chain runs to 527 residues: Probable bifunctional methylthioribulose-1-phosphate dehydratase/enolase-phosphatase E1 (527 aa).

Residues Met1–Asp244 form a methylthioribulose-1-phosphate dehydratase region. Position 116 (Cys116) interacts with substrate. Residues His134 and His136 each contribute to the Zn(2+) site. The Proton donor/acceptor; for methylthioribulose-1-phosphate dehydratase activity role is filled by Glu159. His209 is a binding site for Zn(2+). Residues Ile288–Ile527 are enolase-phosphatase E1. Residues Asp291 and Glu293 each contribute to the Mg(2+) site. Residues Ser426–Ser427 and Lys460 contribute to the substrate site. Position 486 (Asp486) interacts with Mg(2+).

In the N-terminal section; belongs to the aldolase class II family. MtnB subfamily. The protein in the C-terminal section; belongs to the HAD-like hydrolase superfamily. MasA/MtnC family. The cofactor is Zn(2+). Mg(2+) is required as a cofactor.

It carries out the reaction 5-(methylsulfanyl)-D-ribulose 1-phosphate = 5-methylsulfanyl-2,3-dioxopentyl phosphate + H2O. It catalyses the reaction 5-methylsulfanyl-2,3-dioxopentyl phosphate + H2O = 1,2-dihydroxy-5-(methylsulfanyl)pent-1-en-3-one + phosphate. It participates in amino-acid biosynthesis; L-methionine biosynthesis via salvage pathway; L-methionine from S-methyl-5-thio-alpha-D-ribose 1-phosphate: step 2/6. Its pathway is amino-acid biosynthesis; L-methionine biosynthesis via salvage pathway; L-methionine from S-methyl-5-thio-alpha-D-ribose 1-phosphate: step 3/6. It functions in the pathway amino-acid biosynthesis; L-methionine biosynthesis via salvage pathway; L-methionine from S-methyl-5-thio-alpha-D-ribose 1-phosphate: step 4/6. In Ricinus communis (Castor bean), this protein is Probable bifunctional methylthioribulose-1-phosphate dehydratase/enolase-phosphatase E1.